A 339-amino-acid chain; its full sequence is Ferrochelatase (339 aa).

Histidine 202 and glutamate 283 together coordinate Fe cation.

This sequence belongs to the ferrochelatase family.

It is found in the cytoplasm. The enzyme catalyses heme b + 2 H(+) = protoporphyrin IX + Fe(2+). It functions in the pathway porphyrin-containing compound metabolism; protoheme biosynthesis; protoheme from protoporphyrin-IX: step 1/1. Catalyzes the ferrous insertion into protoporphyrin IX. This is Ferrochelatase from Psychrobacter sp. (strain PRwf-1).